We begin with the raw amino-acid sequence, 472 residues long: Phenylalanine--tRNA ligase, mitochondrial (472 aa).

Residues 157-160 (SAHQ), Arg-179, 186-188 (QHY), and 193-195 (QLE) contribute to the substrate site. Lys-202 is subject to N6-acetyllysine. Residues Glu-287 and Phe-312 each coordinate substrate. In terms of domain architecture, FDX-ACB spans 379-471 (SKYPAVFNDI…AVQLLGVEGR (93 aa)).

Belongs to the class-II aminoacyl-tRNA synthetase family. As to quaternary structure, monomer. Mainly expressed in the Purkinje cell of cerebellum.

Its subcellular location is the mitochondrion matrix. The protein resides in the mitochondrion. It catalyses the reaction tRNA(Phe) + L-phenylalanine + ATP = L-phenylalanyl-tRNA(Phe) + AMP + diphosphate + H(+). Functionally, is responsible for the charging of tRNA(Phe) with phenylalanine in mitochondrial translation. To a lesser extent, also catalyzes direct attachment of m-Tyr (an oxidized version of Phe) to tRNA(Phe), thereby opening the way for delivery of the misacylated tRNA to the ribosome and incorporation of ROS-damaged amino acid into proteins. This chain is Phenylalanine--tRNA ligase, mitochondrial (Fars2), found in Rattus norvegicus (Rat).